A 108-amino-acid chain; its full sequence is Cytochrome c-555 (108 aa).

An N-terminal signal peptide occupies residues methionine 1 to alanine 22. Heme c is bound by residues cysteine 36, cysteine 39, histidine 40, and methionine 82.

Binds 1 heme c group covalently per subunit.

This basic c-type monoheme cytochrome has been found exclusively in the green photosynthetic bacteria, although its role in bacterial photosynthesis is not established. It has an unusually low redox potential compared with mitochondrial cytochrome c. It is reactive with cytochrome c oxidases but not with reductases. This Chlorobaculum tepidum (strain ATCC 49652 / DSM 12025 / NBRC 103806 / TLS) (Chlorobium tepidum) protein is Cytochrome c-555.